A 343-amino-acid chain; its full sequence is Heat-inducible transcription repressor HrcA (343 aa).

It belongs to the HrcA family.

In terms of biological role, negative regulator of class I heat shock genes (grpE-dnaK-dnaJ and groELS operons). Prevents heat-shock induction of these operons. The polypeptide is Heat-inducible transcription repressor HrcA (Mycobacterium leprae (strain Br4923)).